The primary structure comprises 442 residues: MNIFDHQIKNVDKGNVVAILGAQWGDEGKGKIIDMLSEYSDITCRFNGGANAGHTISVNDKKYALHLLPCGVLYDNNISVLGNGMVIHVKSLMEEIESVGGKLLDRLYLSNKAHILFDIHQIIDSIQETKKLKEGKQIGTTKRGIGPCYSTKASRIGIRLGTLKNFENFKNMYSKLIDHLMDLYNITEYDKEKELNLFYNYHIKLRDRIVDVISFMNTNLENNKKVLIEGANAAMLDIDFGTYPYVTSSCTTVGGVFSGLGIHHKKLNLVVGVVKSYLTRVGCGPFLTELNNDVGQYLREKGHEYGTTTKRPRRCGWLDIPMLLYVKCINSIDMINLTKLDVLSGLEEILLCVNFKNKKTGELLEKGCYPVEEEISEEYEPVYEKFSGWKEDISTCNEFDELPENAKKYILAIEKYLKTPIVWIGVGPNRKNMIVKKNFNLN.

GTP contacts are provided by residues 25–31 (GDEGKGK), 53–55 (GHT), and lysine 62. Aspartate 26 acts as the Proton acceptor in catalysis. Residues aspartate 26 and glycine 53 each coordinate Mg(2+). Residues 26–29 (DEGK) and 51–54 (NAGH) contribute to the IMP site. Histidine 54 (proton donor) is an active-site residue. IMP is bound by residues threonine 141, arginine 155, asparagine 232, and threonine 247. Threonine 307 provides a ligand contact to GTP. 307–313 (TTTKRPR) is a binding site for substrate. Arginine 311 contributes to the IMP binding site. Residues arginine 313, 339-341 (KLD), and 425-427 (GVG) each bind GTP.

Belongs to the adenylosuccinate synthetase family. As to quaternary structure, homodimer. Requires Mg(2+) as cofactor.

The protein localises to the cytoplasm. The enzyme catalyses IMP + L-aspartate + GTP = N(6)-(1,2-dicarboxyethyl)-AMP + GDP + phosphate + 2 H(+). It functions in the pathway purine metabolism; AMP biosynthesis via de novo pathway; AMP from IMP: step 1/2. Inhibited by hadacidin. Activated by fructose 1,6-bisphosphate. Its function is as follows. Plays an important role in the salvage pathway for purine nucleotide biosynthesis. Catalyzes the first committed step in the biosynthesis of AMP from IMP. This chain is Adenylosuccinate synthetase (Adss), found in Plasmodium falciparum.